The primary structure comprises 471 residues: ATP synthase subunit beta (471 aa).

An ATP-binding site is contributed by G156–T163.

It belongs to the ATPase alpha/beta chains family. As to quaternary structure, F-type ATPases have 2 components, CF(1) - the catalytic core - and CF(0) - the membrane proton channel. CF(1) has five subunits: alpha(3), beta(3), gamma(1), delta(1), epsilon(1). CF(0) has three main subunits: a(1), b(2) and c(9-12). The alpha and beta chains form an alternating ring which encloses part of the gamma chain. CF(1) is attached to CF(0) by a central stalk formed by the gamma and epsilon chains, while a peripheral stalk is formed by the delta and b chains.

It is found in the cell membrane. It catalyses the reaction ATP + H2O + 4 H(+)(in) = ADP + phosphate + 5 H(+)(out). Functionally, produces ATP from ADP in the presence of a proton gradient across the membrane. The catalytic sites are hosted primarily by the beta subunits. The chain is ATP synthase subunit beta from Macrococcus caseolyticus (strain JCSC5402) (Macrococcoides caseolyticum).